A 205-amino-acid polypeptide reads, in one-letter code: GTP-binding protein rho3 (205 aa).

Position 20-27 (20-27 (GDGAAGKT)) interacts with GTP. The short motif at 42–50 (YEPTIFENY) is the Effector region element. GTP is bound by residues 67–71 (DTAGQ) and 125–128 (LKCD). The residue at position 202 (C202) is a Cysteine methyl ester. C202 carries S-geranylgeranyl cysteine lipidation. Residues 203-205 (IIA) constitute a propeptide, removed in mature form.

Belongs to the small GTPase superfamily. Rho family. As to quaternary structure, interacts with for3. Palmitoylated by the erf2-erf4 complex.

It localises to the cell membrane. Functionally, involved in controlling cell shape and septation. Regulates cell separation by modulating the function of the exocyst complex. Involved in post-Golgi vesicle transport. Involved in driving sexual development in a palmitoylation-dependent manner. This is GTP-binding protein rho3 (rho3) from Schizosaccharomyces pombe (strain 972 / ATCC 24843) (Fission yeast).